Here is a 516-residue protein sequence, read N- to C-terminus: MPNPNQAIKKENEPIQVENPTELVRDDGEVEGYQKEEGKFKLVLSILKQCIGVKDIASLRFSLPAQLLEPVGNLEYWNYVDRPDYFAVMGDSDDELERMLGVLRWWFTKDLRFVRGRVVKPYNSVLGEFFRCKWVVTDPTVREDHTLDPDSSQLPTYKTEYSETTKFPLGKSYRPKASRTTSSQSVASTMTKSSTKTSKKKSSKKNSKSESNQDSSNDRSSTAPSTAESNNEHLSSSQKSKHSIVFMAEQTSHHPAVSAFYVTCPSKGIEVYGQDQIAVGFTGTSFKVCAGDLNKGVYVRFNKRDNEEYLCTHPSASVGGILRGNLHINLLDSTVILCPKTRIKTIITYIEERWLGKPRSLVEGVCYRYDPSNDTIDSIKAVPKENILATFKGNWRNCIFYSYAGESESRMLVDLNELDLVHKRCPPLDKQFPFESRKIWFPVTHNILAKHYTQATKAKQEIEDQQRQASAAREESHTEWKPRFFVPDEKEGRPTLTEEGKKVLEQSLSDEYIHGS.

Disordered regions lie at residues 168-240 (PLGK…SQKS) and 459-501 (KQEI…EEGK). Residues 178–187 (SRTTSSQSVA) show a composition bias toward polar residues. At serine 182 the chain carries Phosphoserine. A compositionally biased stretch (basic residues) spans 197–206 (TSKKKSSKKN). Positions 218 to 238 (DRSSTAPSTAESNNEHLSSSQ) are enriched in polar residues.

The protein belongs to the OSBP family.

Its subcellular location is the endoplasmic reticulum. In Schizosaccharomyces pombe (strain 972 / ATCC 24843) (Fission yeast), this protein is Oxysterol-binding protein-like protein 1 (obp1).